Reading from the N-terminus, the 72-residue chain is Large ribosomal subunit protein bL31 (72 aa).

The Zn(2+) site is built by C16, C18, C38, and C41.

The protein belongs to the bacterial ribosomal protein bL31 family. Type A subfamily. Part of the 50S ribosomal subunit. It depends on Zn(2+) as a cofactor.

In terms of biological role, binds the 23S rRNA. The protein is Large ribosomal subunit protein bL31 of Vibrio campbellii (strain ATCC BAA-1116).